A 61-amino-acid chain; its full sequence is Small ribosomal subunit protein uS14 (61 aa).

Zn(2+) contacts are provided by Cys24, Cys27, Cys40, and Cys43.

Belongs to the universal ribosomal protein uS14 family. Zinc-binding uS14 subfamily. Part of the 30S ribosomal subunit. Contacts proteins S3 and S10. The cofactor is Zn(2+).

Functionally, binds 16S rRNA, required for the assembly of 30S particles and may also be responsible for determining the conformation of the 16S rRNA at the A site. This is Small ribosomal subunit protein uS14 from Nitratidesulfovibrio vulgaris (strain ATCC 29579 / DSM 644 / CCUG 34227 / NCIMB 8303 / VKM B-1760 / Hildenborough) (Desulfovibrio vulgaris).